Here is a 106-residue protein sequence, read N- to C-terminus: Ferredoxin (106 aa).

Positions 8 and 16 each coordinate [3Fe-4S] cluster. Cys-20, Cys-39, Cys-42, and Cys-45 together coordinate [4Fe-4S] cluster. The 30-residue stretch at 30–59 folds into the 4Fe-4S ferredoxin-type domain; the sequence is RMLYIHPDECVDCGACEPVCPVEAIYYEDD. Cys-49 provides a ligand contact to [3Fe-4S] cluster. Residues 81–106 form a disordered region; it reads PGGASKVGQTDNDPQAIKDLPPQGED.

[4Fe-4S] cluster is required as a cofactor. Requires [3Fe-4S] cluster as cofactor.

In terms of biological role, ferredoxins are iron-sulfur proteins that transfer electrons in a wide variety of metabolic reactions. In Mycolicibacterium smegmatis (Mycobacterium smegmatis), this protein is Ferredoxin (fdxA).